Here is a 159-residue protein sequence, read N- to C-terminus: NADH-quinone oxidoreductase subunit I (159 aa).

2 consecutive 4Fe-4S ferredoxin-type domains span residues 51 to 80 and 90 to 119; these read RRYE…IEAD and TRYD…EGPN. [4Fe-4S] cluster contacts are provided by cysteine 60, cysteine 63, cysteine 66, cysteine 70, cysteine 99, cysteine 102, cysteine 105, and cysteine 109.

This sequence belongs to the complex I 23 kDa subunit family. As to quaternary structure, NDH-1 is composed of 14 different subunits. Subunits NuoA, H, J, K, L, M, N constitute the membrane sector of the complex. Requires [4Fe-4S] cluster as cofactor.

It localises to the cell inner membrane. The catalysed reaction is a quinone + NADH + 5 H(+)(in) = a quinol + NAD(+) + 4 H(+)(out). Its function is as follows. NDH-1 shuttles electrons from NADH, via FMN and iron-sulfur (Fe-S) centers, to quinones in the respiratory chain. The immediate electron acceptor for the enzyme in this species is believed to be ubiquinone. Couples the redox reaction to proton translocation (for every two electrons transferred, four hydrogen ions are translocated across the cytoplasmic membrane), and thus conserves the redox energy in a proton gradient. In Rickettsia akari (strain Hartford), this protein is NADH-quinone oxidoreductase subunit I.